A 271-amino-acid polypeptide reads, in one-letter code: Orotidine 5'-phosphate decarboxylase (271 aa).

Lysine 95 acts as the Proton donor in catalysis.

The protein belongs to the OMP decarboxylase family. Type 2 subfamily.

It catalyses the reaction orotidine 5'-phosphate + H(+) = UMP + CO2. The protein operates within pyrimidine metabolism; UMP biosynthesis via de novo pathway; UMP from orotate: step 2/2. In Ralstonia pickettii (strain 12J), this protein is Orotidine 5'-phosphate decarboxylase.